The following is a 156-amino-acid chain: Small ribosomal subunit protein uS7 (156 aa).

Belongs to the universal ribosomal protein uS7 family. In terms of assembly, part of the 30S ribosomal subunit. Contacts proteins S9 and S11.

Functionally, one of the primary rRNA binding proteins, it binds directly to 16S rRNA where it nucleates assembly of the head domain of the 30S subunit. Is located at the subunit interface close to the decoding center, probably blocks exit of the E-site tRNA. In Thermomicrobium roseum (strain ATCC 27502 / DSM 5159 / P-2), this protein is Small ribosomal subunit protein uS7.